We begin with the raw amino-acid sequence, 396 residues long: Ornithine aminotransferase (396 aa).

An N6-(pyridoxal phosphate)lysine modification is found at Lys-255.

It belongs to the class-III pyridoxal-phosphate-dependent aminotransferase family. OAT subfamily. Pyridoxal 5'-phosphate is required as a cofactor.

It is found in the cytoplasm. The catalysed reaction is a 2-oxocarboxylate + L-ornithine = L-glutamate 5-semialdehyde + an L-alpha-amino acid. The protein operates within amino-acid biosynthesis; L-proline biosynthesis; L-glutamate 5-semialdehyde from L-ornithine: step 1/1. Functionally, catalyzes the interconversion of ornithine to glutamate semialdehyde. In Bacillus cereus (strain Q1), this protein is Ornithine aminotransferase.